The following is a 361-amino-acid chain: Glutamate 5-kinase (361 aa).

K14 is a binding site for ATP. Residues S54, D141, and N153 each coordinate substrate. The region spanning 277–355 (KGAVIINQGA…KGLKPVIHYD (79 aa)) is the PUA domain.

This sequence belongs to the glutamate 5-kinase family.

Its subcellular location is the cytoplasm. The enzyme catalyses L-glutamate + ATP = L-glutamyl 5-phosphate + ADP. Its pathway is amino-acid biosynthesis; L-proline biosynthesis; L-glutamate 5-semialdehyde from L-glutamate: step 1/2. In terms of biological role, catalyzes the transfer of a phosphate group to glutamate to form L-glutamate 5-phosphate. This is Glutamate 5-kinase from Chlorobaculum tepidum (strain ATCC 49652 / DSM 12025 / NBRC 103806 / TLS) (Chlorobium tepidum).